A 154-amino-acid chain; its full sequence is Probable archaeosortase D (154 aa).

Helical transmembrane passes span 6–26, 57–77, 91–111, and 125–145; these read AIYI…LKML, IIEI…LGYI, YSVF…ILII, and VISF…IYLL. Cys64 serves as the catalytic Acyl-thioester intermediate. The active-site Proton donor is the Arg106.

This sequence belongs to the exosortase/archaeosortase family. Archaeosortase D subfamily.

The protein localises to the cell membrane. Transpeptidase that recognizes and modifies its substrate by proteolytic cleavage of a sorting signal. Following cleavage, a covalent intermediate is formed via a thioester bond between the archaeosortase and its substrate, which is then transferred and covalently attached to the cell membrane. This chain is Probable archaeosortase D, found in Methanocaldococcus jannaschii (strain ATCC 43067 / DSM 2661 / JAL-1 / JCM 10045 / NBRC 100440) (Methanococcus jannaschii).